A 341-amino-acid polypeptide reads, in one-letter code: Holliday junction branch migration complex subunit RuvB (341 aa).

The large ATPase domain (RuvB-L) stretch occupies residues 1-180 (MAKSHTLNPE…FGIQLRLDYY (180 aa)). Residues leucine 19, arginine 20, glycine 61, lysine 64, threonine 65, threonine 66, arginine 170, tyrosine 180, and arginine 217 each contribute to the ATP site. Residue threonine 65 coordinates Mg(2+). The segment at 181–251 (NDEEMKEIVL…LCLKAFEKMG (71 aa)) is small ATPAse domain (RuvB-S). Residues 254–341 (DLGLDGMDRQ…ENHGQDPTLF (88 aa)) form a head domain (RuvB-H) region. Residues arginine 309 and arginine 314 each coordinate DNA.

Belongs to the RuvB family. In terms of assembly, homohexamer. Forms an RuvA(8)-RuvB(12)-Holliday junction (HJ) complex. HJ DNA is sandwiched between 2 RuvA tetramers; dsDNA enters through RuvA and exits via RuvB. An RuvB hexamer assembles on each DNA strand where it exits the tetramer. Each RuvB hexamer is contacted by two RuvA subunits (via domain III) on 2 adjacent RuvB subunits; this complex drives branch migration. In the full resolvosome a probable DNA-RuvA(4)-RuvB(12)-RuvC(2) complex forms which resolves the HJ.

It is found in the cytoplasm. The catalysed reaction is ATP + H2O = ADP + phosphate + H(+). The RuvA-RuvB-RuvC complex processes Holliday junction (HJ) DNA during genetic recombination and DNA repair, while the RuvA-RuvB complex plays an important role in the rescue of blocked DNA replication forks via replication fork reversal (RFR). RuvA specifically binds to HJ cruciform DNA, conferring on it an open structure. The RuvB hexamer acts as an ATP-dependent pump, pulling dsDNA into and through the RuvAB complex. RuvB forms 2 homohexamers on either side of HJ DNA bound by 1 or 2 RuvA tetramers; 4 subunits per hexamer contact DNA at a time. Coordinated motions by a converter formed by DNA-disengaged RuvB subunits stimulates ATP hydrolysis and nucleotide exchange. Immobilization of the converter enables RuvB to convert the ATP-contained energy into a lever motion, pulling 2 nucleotides of DNA out of the RuvA tetramer per ATP hydrolyzed, thus driving DNA branch migration. The RuvB motors rotate together with the DNA substrate, which together with the progressing nucleotide cycle form the mechanistic basis for DNA recombination by continuous HJ branch migration. Branch migration allows RuvC to scan DNA until it finds its consensus sequence, where it cleaves and resolves cruciform DNA. The chain is Holliday junction branch migration complex subunit RuvB from Leptospira borgpetersenii serovar Hardjo-bovis (strain JB197).